Consider the following 675-residue polypeptide: DNA ligase (675 aa).

NAD(+) contacts are provided by residues 36-40 (DAAYD), 85-86 (SL), and Glu-117. Lys-119 (N6-AMP-lysine intermediate) is an active-site residue. NAD(+) is bound by residues Arg-140, Glu-177, Lys-294, and Lys-318. Zn(2+)-binding residues include Cys-412, Cys-415, Cys-430, and Cys-436. The region spanning 597–675 (AEDLPLSGNT…EAEFLELIGE (79 aa)) is the BRCT domain.

This sequence belongs to the NAD-dependent DNA ligase family. LigA subfamily. The cofactor is Mg(2+). Requires Mn(2+) as cofactor.

The enzyme catalyses NAD(+) + (deoxyribonucleotide)n-3'-hydroxyl + 5'-phospho-(deoxyribonucleotide)m = (deoxyribonucleotide)n+m + AMP + beta-nicotinamide D-nucleotide.. DNA ligase that catalyzes the formation of phosphodiester linkages between 5'-phosphoryl and 3'-hydroxyl groups in double-stranded DNA using NAD as a coenzyme and as the energy source for the reaction. It is essential for DNA replication and repair of damaged DNA. This chain is DNA ligase, found in Thioalkalivibrio sulfidiphilus (strain HL-EbGR7).